The chain runs to 244 residues: EKC/KEOPS complex subunit Tp53rkb (244 aa).

The Protein kinase domain maps to 24–244 (LSGLELVQQG…LRGRKRSMVG (221 aa)). Residue S25 is modified to Phosphoserine. Residues 30 to 38 (VQQGAEARV) and K51 contribute to the ATP site. Residues 69–86 (RRRTVQEARALLRCRRAG) carry the Nuclear localization signal motif. D153 acts as the Proton acceptor in catalysis.

Belongs to the protein kinase superfamily. BUD32 family. As to quaternary structure, component of the EKC/KEOPS complex composed of at least GON7, TP53RK, TPRKB, OSGEP and LAGE3; the whole complex dimerizes.

The protein resides in the nucleus. It carries out the reaction L-seryl-[protein] + ATP = O-phospho-L-seryl-[protein] + ADP + H(+). The enzyme catalyses L-threonyl-[protein] + ATP = O-phospho-L-threonyl-[protein] + ADP + H(+). Functionally, component of the EKC/KEOPS complex that is required for the formation of a threonylcarbamoyl group on adenosine at position 37 (t(6)A37) in tRNAs that read codons beginning with adenine. The complex is probably involved in the transfer of the threonylcarbamoyl moiety of threonylcarbamoyl-AMP (TC-AMP) to the N6 group of A37. TP53RK has ATPase activity in the context of the EKC/KEOPS complex and likely plays a supporting role to the catalytic subunit OSGEP. Atypical protein kinase that phosphorylates 'Ser-15' of p53/TP53 protein and may therefore participate in its activation. This is EKC/KEOPS complex subunit Tp53rkb from Mus musculus (Mouse).